Consider the following 254-residue polypeptide: Translation initiation factor 2 subunit alpha (254 aa).

An S1 motif domain is found at Gly10–Lys81.

The protein belongs to the eIF-2-alpha family. In terms of assembly, heterotrimer composed of an alpha, a beta and a gamma chain.

EIF-2 functions in the early steps of protein synthesis by forming a ternary complex with GTP and initiator tRNA. The sequence is that of Translation initiation factor 2 subunit alpha from Thermoplasma acidophilum (strain ATCC 25905 / DSM 1728 / JCM 9062 / NBRC 15155 / AMRC-C165).